A 456-amino-acid chain; its full sequence is Adenylosuccinate lyase (456 aa).

Residues 15–16 (RY), 90–92 (NHD), and 122–123 (TS) each bind N(6)-(1,2-dicarboxyethyl)-AMP. The active-site Proton donor/acceptor is the His-171. Residue Gln-247 participates in N(6)-(1,2-dicarboxyethyl)-AMP binding. The Proton donor/acceptor role is filled by Ser-295. Residues Ser-296, 301–303 (KIN), Asn-309, Arg-335, and 340–344 (STVLR) contribute to the N(6)-(1,2-dicarboxyethyl)-AMP site.

This sequence belongs to the lyase 1 family. Adenylosuccinate lyase subfamily. As to quaternary structure, homotetramer. Residues from neighboring subunits contribute catalytic and substrate-binding residues to each active site.

It catalyses the reaction N(6)-(1,2-dicarboxyethyl)-AMP = fumarate + AMP. The enzyme catalyses (2S)-2-[5-amino-1-(5-phospho-beta-D-ribosyl)imidazole-4-carboxamido]succinate = 5-amino-1-(5-phospho-beta-D-ribosyl)imidazole-4-carboxamide + fumarate. It functions in the pathway purine metabolism; AMP biosynthesis via de novo pathway; AMP from IMP: step 2/2. The protein operates within purine metabolism; IMP biosynthesis via de novo pathway; 5-amino-1-(5-phospho-D-ribosyl)imidazole-4-carboxamide from 5-amino-1-(5-phospho-D-ribosyl)imidazole-4-carboxylate: step 2/2. Catalyzes two reactions in de novo purine nucleotide biosynthesis. Catalyzes the breakdown of 5-aminoimidazole- (N-succinylocarboxamide) ribotide (SAICAR or 2-[5-amino-1-(5-phospho-beta-D-ribosyl)imidazole-4-carboxamido]succinate) to 5-aminoimidazole-4-carboxamide ribotide (AICAR or 5-amino-1-(5-phospho-beta-D-ribosyl)imidazole-4-carboxamide) and fumarate, and of adenylosuccinate (ADS or N(6)-(1,2-dicarboxyethyl)-AMP) to adenosine monophosphate (AMP) and fumarate. The protein is Adenylosuccinate lyase (purB) of Buchnera aphidicola subsp. Schizaphis graminum (strain Sg).